A 510-amino-acid chain; its full sequence is NAD(P)H-quinone oxidoreductase subunit 2 A, chloroplastic (510 aa).

The next 13 membrane-spanning stretches (helical) occupy residues 26 to 46, 57 to 77, 99 to 119, 124 to 144, 149 to 169, 183 to 203, 227 to 247, 295 to 315, 323 to 342, 354 to 374, 395 to 415, 418 to 438, and 484 to 504; these read LFDG…ILLL, IPWF…ALLF, IFQF…VEYI, MAIT…MFLC, LITI…LSGY, YLLM…WLYG, PGIS…LSPA, WHPL…LIAI, MLAY…IIVG, YMLF…LFGL, ALSL…AGFF, LHLF…IGLF, and MIVC…IIAI.

Belongs to the complex I subunit 2 family. NDH is composed of at least 16 different subunits, 5 of which are encoded in the nucleus.

The protein resides in the plastid. Its subcellular location is the chloroplast thylakoid membrane. It catalyses the reaction a plastoquinone + NADH + (n+1) H(+)(in) = a plastoquinol + NAD(+) + n H(+)(out). It carries out the reaction a plastoquinone + NADPH + (n+1) H(+)(in) = a plastoquinol + NADP(+) + n H(+)(out). In terms of biological role, NDH shuttles electrons from NAD(P)H:plastoquinone, via FMN and iron-sulfur (Fe-S) centers, to quinones in the photosynthetic chain and possibly in a chloroplast respiratory chain. The immediate electron acceptor for the enzyme in this species is believed to be plastoquinone. Couples the redox reaction to proton translocation, and thus conserves the redox energy in a proton gradient. The sequence is that of NAD(P)H-quinone oxidoreductase subunit 2 A, chloroplastic from Oenothera biennis (German evening primrose).